A 530-amino-acid polypeptide reads, in one-letter code: MSTVAEHVRAAPSSVDRPRTYEVRTYGCQMNVHDSERLTGSLEAAGYVSAEGAEADIVVINTCAVRENADNKLYGNLGHLAGVKRRHEGMQIAVGGCLAQKDRATVLEKAPWVDVVFGTHNMGALPTLLERARHNGEAQLEILESLETFPSTLPTKRDEIASGWVSISVGCNNTCTFCIVPALRGKEKDRRPGDILAEIQALVDDGAVEVTLLGQNVNSYGVEFGDRQAFGKLLRAAGAIEGLERIRFTSPHPAAFTDDVIDAMAETPAVMPQLHMPLQSGSDRILKAMRRSYRSERFLGILDRVRTRVPDAAITTDIIVGFPGETEEDFQETLRVVEAARFSSAFTFQYSIRPGTPAATMEEQVPADVVKERYGRLTALQERISHEENQRVVGRTVEVLVSAHEGRKDGDTRRVTGRAQDGRLVHLDVPEGSAEPRPGDAVDVEVTRAAPFHLIADSVDGAPLRIRRTRAGDAWERAQADSCGVPTPATGASAGAAPRVSLGLPTLRVPTTASTSAPVGDGSAHPRHRA.

The region spanning 19–134 is the MTTase N-terminal domain; the sequence is RTYEVRTYGC…LPTLLERARH (116 aa). [4Fe-4S] cluster contacts are provided by cysteine 28, cysteine 63, cysteine 97, cysteine 171, cysteine 175, and cysteine 178. The region spanning 157–387 is the Radical SAM core domain; that stretch reads RDEIASGWVS…TALQERISHE (231 aa). In terms of domain architecture, TRAM spans 390–460; it reads QRVVGRTVEV…PFHLIADSVD (71 aa). The tract at residues 509–530 is disordered; sequence VPTTASTSAPVGDGSAHPRHRA.

Belongs to the methylthiotransferase family. MiaB subfamily. In terms of assembly, monomer. [4Fe-4S] cluster is required as a cofactor.

Its subcellular location is the cytoplasm. It catalyses the reaction N(6)-dimethylallyladenosine(37) in tRNA + (sulfur carrier)-SH + AH2 + 2 S-adenosyl-L-methionine = 2-methylsulfanyl-N(6)-dimethylallyladenosine(37) in tRNA + (sulfur carrier)-H + 5'-deoxyadenosine + L-methionine + A + S-adenosyl-L-homocysteine + 2 H(+). Its function is as follows. Catalyzes the methylthiolation of N6-(dimethylallyl)adenosine (i(6)A), leading to the formation of 2-methylthio-N6-(dimethylallyl)adenosine (ms(2)i(6)A) at position 37 in tRNAs that read codons beginning with uridine. The sequence is that of tRNA-2-methylthio-N(6)-dimethylallyladenosine synthase from Clavibacter sepedonicus (Clavibacter michiganensis subsp. sepedonicus).